A 257-amino-acid polypeptide reads, in one-letter code: Lipid A 4'-phosphatase (257 aa).

6 helical membrane-spanning segments follow: residues 21–41 (FGAF…FRAF), 85–105 (IFFR…IECY), 119–139 (KLKV…NVIL), 174–194 (CSFV…LLFV), 201–221 (ALVP…LSFG), and 225–245 (LSDV…LLAL).

The protein belongs to the lipid A LpxF 4'-phosphatase family.

The protein resides in the cell inner membrane. It participates in bacterial outer membrane biogenesis; LPS lipid A biosynthesis. In terms of biological role, probably removes the 4'-phosphate moiety from lipid A species. Not seen to act on other membrane components, nor does it dephosphorylate the 1-phosphate group of lipid A and/or lipid A precursors. This is Lipid A 4'-phosphatase from Rhizobium etli (strain ATCC 51251 / DSM 11541 / JCM 21823 / NBRC 15573 / CFN 42).